A 662-amino-acid polypeptide reads, in one-letter code: Glycogen debranching enzyme (662 aa).

Catalysis depends on Asp338, which acts as the Nucleophile. Glu373 serves as the catalytic Proton donor.

It belongs to the glycosyl hydrolase 13 family.

The catalysed reaction is Hydrolysis of (1-&gt;6)-alpha-D-glucosidic linkages to branches with degrees of polymerization of three or four glucose residues in limit dextrin.. Its pathway is glycan degradation; glycogen degradation. In terms of biological role, removes maltotriose and maltotetraose chains that are attached by 1,6-alpha-linkage to the limit dextrin main chain, generating a debranched limit dextrin. The sequence is that of Glycogen debranching enzyme from Yersinia pestis bv. Antiqua (strain Angola).